The following is a 572-amino-acid chain: Periplasmic pectate lyase (572 aa).

Residues 1-23 (MKKRALLLSMSVLAMLYIPAGQA) form the signal peptide.

This sequence belongs to the polysaccharide lyase 2 family.

The protein resides in the periplasm. The enzyme catalyses Eliminative cleavage of (1-&gt;4)-alpha-D-galacturonan to give oligosaccharides with 4-deoxy-alpha-D-galact-4-enuronosyl groups at their non-reducing ends.. The protein operates within glycan metabolism; pectin degradation; 2-dehydro-3-deoxy-D-gluconate from pectin: step 2/5. This Yersinia pseudotuberculosis serotype I (strain IP32953) protein is Periplasmic pectate lyase (pelY).